The chain runs to 68 residues: Protein SrnB (68 aa).

Residues 23–42 (YALIGLLAVCATVLCFSLIF) form a helical membrane-spanning segment.

The protein belongs to the Hok/Gef family.

Its subcellular location is the cell inner membrane. Toxic component of a type I toxin-antitoxin (TA) system. Its normal function is believed to be effective plasmid stabilization through postsegregational killing of cells that have lost the F plasmid. Promotes degradation of stable RNA in E.coli. The protein is Protein SrnB (srnB) of Escherichia coli (strain K12).